A 904-amino-acid chain; its full sequence is Myelin regulatory factor-like protein (904 aa).

The segment at 46-132 is disordered; sequence LQRQLPDTPP…ATCRHQTGPS (87 aa). Residues 100–117 show a composition bias toward polar residues; that stretch reads PSQSMAGQTHSSFQNGYP. The NDT80 DNA-binding region spans 108 to 400; that stretch reads THSSFQNGYP…SNPGQFENDS (293 aa). The Peptidase S74 domain maps to 446–554; it reads SDSRVKENIQ…KLTNNLEERI (109 aa). Positions 538-575 form a coiled coil; it reads GAVKQLCKLTNNLEERIEELEIWNKKLARLKRLSSSWK. A helical transmembrane segment spans residues 624-644; it reads LVVVLIAVMAFCALTIVALYI. The disordered stretch occupies residues 656-688; sequence NLPLSNMTSSPEPALSSTAPTSAPHTTPETTQT. A compositionally biased stretch (low complexity) spans 663–688; it reads TSSPEPALSSTAPTSAPHTTPETTQT.

Belongs to the MRF family.

It is found in the membrane. The polypeptide is Myelin regulatory factor-like protein (Myrfl) (Mus musculus (Mouse)).